The sequence spans 382 residues: GDP-mannose 4,6 dehydratase 2 (382 aa).

Residues 40 to 45, 97 to 98, 119 to 123, and Tyr-134 each bind NADP(+); these read GITGQD, DM, and LAAQS. Thr-166 is an active-site residue. Catalysis depends on nucleophile residues Glu-168 and Tyr-190. Residues Lys-194, His-220, and Arg-225 each coordinate NADP(+).

Belongs to the NAD(P)-dependent epimerase/dehydratase family. GDP-mannose 4,6-dehydratase subfamily. Requires NADP(+) as cofactor.

It carries out the reaction GDP-alpha-D-mannose = GDP-4-dehydro-alpha-D-rhamnose + H2O. It functions in the pathway nucleotide-sugar biosynthesis; GDP-L-fucose biosynthesis via de novo pathway; GDP-L-fucose from GDP-alpha-D-mannose: step 1/2. Functionally, catalyzes the conversion of GDP-D-mannose to GDP-4-dehydro-6-deoxy-D-mannose. This is GDP-mannose 4,6 dehydratase 2 (gmd-2) from Caenorhabditis elegans.